An 85-amino-acid chain; its full sequence is F1845 adhesin operon regulatory protein (85 aa).

Regulates the transcription of genes involved in the biosynthesis of F1845 fimbrial adhesin. The sequence is that of F1845 adhesin operon regulatory protein (daaA) from Escherichia coli.